The following is a 402-amino-acid chain: MSRVSQARNLGKYFLLIDNMLVVLGFFVVFPLISIRFVDQMGWAAVMVGIALGLRQFIQQGLGIFGGAIADRFGAKPMIVTGMLMRAAGFATMGIAHEPWLLWFSCFLSGLGGTLFDPPRSALVVKLIRPEQRGRFFSLLMMQDSAGAVIGALLGSWLLQYDFRLVCATGAILFILCALFNAWLLPAWKLSTARTPVREGMRRVMSNKRFVTYVLTLAGYYMLAVQVMLMLPIMVNDIAGSPAAVKWMYAIEACLSLTLLYPIARWSEKRFRLEHRLMAGLLVMSLSMLPIGMVGNLQQLFTLICAFYIGSVIAEPARETLSASPADARARGSYMGFSRLGLAIGGAISYIGGGWLFDMGKALAQPELPWMMLGIIGFITFLALGWQFSHKRTPRRMLEPGA.

The Cytoplasmic portion of the chain corresponds to 1-12 (MSRVSQARNLGK). Residues 13-33 (YFLLIDNMLVVLGFFVVFPLI) form a helical membrane-spanning segment. The Periplasmic segment spans residues 34–98 (SIRFVDQMGW…GFATMGIAHE (65 aa)). A helical membrane pass occupies residues 99–116 (PWLLWFSCFLSGLGGTLF). Topologically, residues 117 to 138 (DPPRSALVVKLIRPEQRGRFFS) are cytoplasmic. Residues 139–159 (LLMMQDSAGAVIGALLGSWLL) traverse the membrane as a helical segment. At 160–164 (QYDFR) the chain is on the periplasmic side. A helical membrane pass occupies residues 165–185 (LVCATGAILFILCALFNAWLL). The Cytoplasmic segment spans residues 186–213 (PAWKLSTARTPVREGMRRVMSNKRFVTY). A helical transmembrane segment spans residues 214–234 (VLTLAGYYMLAVQVMLMLPIM). The Periplasmic segment spans residues 235–243 (VNDIAGSPA). The chain crosses the membrane as a helical span at residues 244 to 264 (AVKWMYAIEACLSLTLLYPIA). Topologically, residues 265-276 (RWSEKRFRLEHR) are cytoplasmic. Residues 277 to 297 (LMAGLLVMSLSMLPIGMVGNL) traverse the membrane as a helical segment. Topologically, residues 298 to 299 (QQ) are periplasmic. A helical transmembrane segment spans residues 300–320 (LFTLICAFYIGSVIAEPARET). The Cytoplasmic portion of the chain corresponds to 321-339 (LSASPADARARGSYMGFSR). The helical transmembrane segment at 340 to 360 (LGLAIGGAISYIGGGWLFDMG) threads the bilayer. Residues 361–367 (KALAQPE) lie on the Periplasmic side of the membrane. The chain crosses the membrane as a helical span at residues 368 to 388 (LPWMMLGIIGFITFLALGWQF). Residues 389-402 (SHKRTPRRMLEPGA) are Cytoplasmic-facing.

This sequence belongs to the major facilitator superfamily. DHA1 family. MdtH (TC 2.A.1.2.21) subfamily.

It is found in the cell inner membrane. This Salmonella typhi protein is Multidrug resistance protein MdtH.